Reading from the N-terminus, the 142-residue chain is MLKIEEIKEILPHRYPFLLIDRVTEMDIEEKLFVKGYKNVSANEQFFQGHYPQEPIMPGVLQIEALAQAGAVAILSMEKFKGKTPLFAGTNKVRFKAKVVPGDRLDLYCEIVKLKGPIGIGKGIASVDGKTVCEAEILFAIG.

The active site involves His-50.

This sequence belongs to the thioester dehydratase family. FabZ subfamily.

It is found in the cytoplasm. It catalyses the reaction a (3R)-hydroxyacyl-[ACP] = a (2E)-enoyl-[ACP] + H2O. Functionally, involved in unsaturated fatty acids biosynthesis. Catalyzes the dehydration of short chain beta-hydroxyacyl-ACPs and long chain saturated and unsaturated beta-hydroxyacyl-ACPs. In Clostridium botulinum (strain Alaska E43 / Type E3), this protein is 3-hydroxyacyl-[acyl-carrier-protein] dehydratase FabZ.